We begin with the raw amino-acid sequence, 196 residues long: uncharacterized protein (196 aa).

The tract at residues 44-80 is disordered; it reads RSVAVPGTEGKKAQNLRQLPAARLTYPTSSSTRPSHA.

This is an uncharacterized protein from Treponema pallidum (strain Nichols).